Consider the following 187-residue polypeptide: Elongation factor P (187 aa).

The protein belongs to the elongation factor P family.

It is found in the cytoplasm. Its pathway is protein biosynthesis; polypeptide chain elongation. Its function is as follows. Involved in peptide bond synthesis. Stimulates efficient translation and peptide-bond synthesis on native or reconstituted 70S ribosomes in vitro. Probably functions indirectly by altering the affinity of the ribosome for aminoacyl-tRNA, thus increasing their reactivity as acceptors for peptidyl transferase. The chain is Elongation factor P from Mycoplasmopsis pulmonis (strain UAB CTIP) (Mycoplasma pulmonis).